The primary structure comprises 485 residues: MSVPLLKIGVVLSTMAMITNWMSQTLPSLVGLNTTKLSAAGGGTLDRSTGVLPTNPEESWQVYSSAQDSEGRCICTVVAPQQTMCSRDARTKQLRQLLEKVQNMSQSIEVLDRRTQRDLQYVEKMENQMKGLESKFKQVEESHKQHLARQFKAIKAKMDELRPLIPVLEEYKADAKLVLQFKEEVQNLTSVLNELQEEIGAYDYDELQSRVSNLEERLRACMQKLACGKLTGISDPVTVKTSGSRFGSWMTDPLAPEGDNRVWYMDGYHNNRFVREYKSMVDFMNTDNFTSHRLPHPWSGTGQVVYNGSIYFNKFQSHIIIRFDLKTETILKTRSLDYAGYNNMYHYAWGGHSDIDLMVDESGLWAVYATNQNAGNIVVSRLDPVSLQTLQTWNTSYPKRSAGEAFIICGTLYVTNGYSGGTKVHYAYQTNASTYEYIDIPFQNKYSHISMLDYNPKDRALYAWNNGHQILYNVTLFHVIRSDEL.

The N-terminal stretch at 1–16 (MSVPLLKIGVVLSTMA) is a signal peptide. Asn33, Asn103, Asn187, Asn288, Asn307, Asn394, Asn431, and Asn473 each carry an N-linked (GlcNAc...) asparagine glycan. Residues 87-225 (RDARTKQLRQ…ERLRACMQKL (139 aa)) are a coiled coil. The 253-residue stretch at 226–478 (ACGKLTGISD…QILYNVTLFH (253 aa)) folds into the Olfactomedin-like domain. The cysteines at positions 227 and 409 are disulfide-linked.

As to quaternary structure, homotetramer; disulfide-linked. Dimer of dimers, giving rise to a V-shaped homotretramer. Isoform 1 and isoform 3 interact with RTN4R. Identified in a complex with RTN4R and LINGO1. Peripherally associated with AMPAR complex. AMPAR complex consists of an inner core made of 4 pore-forming GluA/GRIA proteins (GRIA1, GRIA2, GRIA3 and GRIA4) and 4 major auxiliary subunits arranged in a twofold symmetry. One of the two pairs of distinct binding sites is occupied either by CNIH2, CNIH3 or CACNG2, CACNG3. The other harbors CACNG2, CACNG3, CACNG4, CACNG8 or GSG1L. This inner core of AMPAR complex is complemented by outer core constituents binding directly to the GluA/GRIA proteins at sites distinct from the interaction sites of the inner core constituents. Outer core constituents include at least PRRT1, PRRT2, CKAMP44/SHISA9, FRRS1L and NRN1. The proteins of the inner and outer core serve as a platform for other, more peripherally associated AMPAR constituents, including OLFM1. Alone or in combination, these auxiliary subunits control the gating and pharmacology of the AMPAR complex and profoundly impact their biogenesis and protein processing. Interacts with OLFM2.

It is found in the secreted. The protein resides in the synapse. The protein localises to the endoplasmic reticulum. Its subcellular location is the cell projection. It localises to the axon. It is found in the perikaryon. Functionally, contributes to the regulation of axonal growth in the embryonic and adult central nervous system by inhibiting interactions between RTN4R and LINGO1. Inhibits RTN4R-mediated axon growth cone collapse. May play an important role in regulating the production of neural crest cells by the neural tube. May be required for normal responses to olfactory stimuli. In Homo sapiens (Human), this protein is Noelin (OLFM1).